The sequence spans 224 residues: Golgi to ER traffic protein 1 (224 aa).

Residues 1–33 (MDEAIIVDAEFVAPVGTTAGEFVPIDRAPAAGL) are Lumenal-facing. The helical transmembrane segment at 34 to 53 (LLLVAFVVLYAKVISKLGKP) threads the bilayer. The Cytoplasmic segment spans residues 54–137 (AIQEFLWEII…RFFTIISSAI (84 aa)). Residues 102-124 (AKLDREYGKLKVEIEDINNLLTA) adopt a coiled-coil conformation. Residues 138-158 (FLSTTGMKMFLRIKHRKAAIF) traverse the membrane as a helical segment. Topologically, residues 159 to 182 (WLPKNAFPYPIEYILSFSSAPLGS) are lumenal. Residues 183–199 (VSVSAWLMICDAAMDLI) traverse the membrane as a helical segment. Topologically, residues 200-224 (VTIFVALVVGVIGMLRSNKVKPKTA) are cytoplasmic.

This sequence belongs to the WRB/GET1 family. As to quaternary structure, component of the Golgi to ER traffic (GET) complex, which is composed of GET1, GET2 and GET3. Within the complex, GET1 and GET2 form a heterotetramer which is stabilized by phosphatidylinositol binding and which binds to the GET3 homodimer.

The protein resides in the endoplasmic reticulum membrane. It localises to the golgi apparatus membrane. Functionally, required for the post-translational delivery of tail-anchored (TA) proteins to the endoplasmic reticulum. Together with GET2, acts as a membrane receptor for soluble GET3, which recognizes and selectively binds the transmembrane domain of TA proteins in the cytosol. The GET complex cooperates with the HDEL receptor ERD2 to mediate the ATP-dependent retrieval of resident ER proteins that contain a C-terminal H-D-E-L retention signal from the Golgi to the ER. This Yarrowia lipolytica (strain CLIB 122 / E 150) (Yeast) protein is Golgi to ER traffic protein 1.